Reading from the N-terminus, the 710-residue chain is MADTTPEPCGQLMVHSDTHSDTVLASLEDQRKKGFLCDITLIVENVHFRAHKALLAASSEYFSMMFAEEGEIGQSIYMLEGMVADTFGILLEFIYTGYLHASEKTTEQILATAQFLKVYDLVKAYADFQDNHSAPKPPALNCTGTPVVVISNKKNDPLKRKRGRPRKANGLQEGRSELAAEGELQLRVNNSVQNRQNFVFKEEDSVKLSEQTPEDKESEPAGEPGSVEEVPAEKDENFDPKAGDGQESQSRCSRRRIRRSVKLKDYKLLGDEDDQSTAKRLCGRKKRSSGPEARCKDCDRVFKYSHFLAIHQRRHTGERPFKCNECGKGFAQKHSLQVHTRMHTGERPYTCTVCGKALTTKHSLLEHMSLHSGQKSFTCDQCGKYFSQKRQLKSHYRVHTGHSLPECSHCHRKFMDVSQLKKHLRTHTGEKPFTCEICGKSFTAKSSLQTHIRIHRGEKPYSCSICGKCFSDSSAKRRHCILHTGKKPFSCPECGLQFARLDNLKAHLKIHSKEKHTADSSSVSGSNVDEGRNILQLQPYQLSTSGEQEIQLLVTDSVHNINFMPGPSQGVSIVAAESPQSMATDPAANITLLTQQPEQLQGLILSAQQEQAEHIQSLSVIGGQMESSQTEPVHVITLSKETLEHLHAHQEQTTSSVPAADTGARATPVPSTRPGAELTQAPLAVPLDPSPGATVAGWPFGPSSYRSLKM.

In terms of domain architecture, BTB spans 37 to 103; the sequence is CDITLIVENV…IYTGYLHASE (67 aa). Disordered regions lie at residues 134–176 and 202–256; these read APKP…EGRS and EEDS…SRRR. Residues 159–171 constitute a DNA-binding region (a.T hook); it reads KRKRGRPRKANGL. Basic and acidic residues-rich tracts occupy residues 202–219 and 231–244; these read EEDSVKLSEQTPEDKESE and PAEKDENFDPKAGD. C2H2-type zinc fingers lie at residues 293–315, 321–343, 349–371, 377–399, 405–427, 433–455, 461–483, and 489–511; these read ARCKDCDRVFKYSHFLAIHQRRH, FKCNECGKGFAQKHSLQVHTRMH, YTCTVCGKALTTKHSLLEHMSLH, FTCDQCGKYFSQKRQLKSHYRVH, PECSHCHRKFMDVSQLKKHLRTH, FTCEICGKSFTAKSSLQTHIRIH, YSCSICGKCFSDSSAKRRHCILH, and FSCPECGLQFARLDNLKAHLKIH. Positions 651-676 are disordered; that stretch reads EQTTSSVPAADTGARATPVPSTRPGA.

It belongs to the krueppel C2H2-type zinc-finger protein family. As to quaternary structure, interacts with MN1. Widely expressed. Highest level in liver, testis and kidney.

The protein resides in the nucleus. Functionally, may be involved in BMP2-induced transcription. In Mus musculus (Mouse), this protein is Zinc finger and BTB domain-containing protein 24 (Zbtb24).